We begin with the raw amino-acid sequence, 464 residues long: E3 ubiquitin-protein ligase RNF38 (464 aa).

The interval 1-94 is disordered; sequence MRESEDSPSP…NSISQDENYH (94 aa). The Bipartite nuclear localization signal 1 signature appears at 6-20; the sequence is DSPSPKRQRLSHSVF. Residues 38–53 are compositionally biased toward polar residues; it reads MTSNRQPPSVRPNQHH. The Bipartite nuclear localization signal 2 signature appears at 64–79; that stretch reads RNRRSPPVRRQRGRRE. The span at 64-83 shows a compositional bias: basic residues; the sequence is RNRRSPPVRRQRGRRERLSR. The segment at 412-453 adopts an RING-type zinc-finger fold; it reads CVVCMCDFESRQLLRVLPCNHEFHAKCVDKWLKGNRTCPICR.

It is found in the nucleus. It carries out the reaction S-ubiquitinyl-[E2 ubiquitin-conjugating enzyme]-L-cysteine + [acceptor protein]-L-lysine = [E2 ubiquitin-conjugating enzyme]-L-cysteine + N(6)-ubiquitinyl-[acceptor protein]-L-lysine.. It participates in protein modification; protein ubiquitination. Functionally, acts as an E3 ubiquitin-protein ligase able to ubiquitinate p53/TP53 which promotes its relocalization to discrete foci associated with PML nuclear bodies. Exhibits preference for UBE2D2 as a E2 enzyme. The protein is E3 ubiquitin-protein ligase RNF38 of Mus musculus (Mouse).